Here is a 146-residue protein sequence, read N- to C-terminus: Transcription antitermination protein NusB (146 aa).

It belongs to the NusB family.

Involved in transcription antitermination. Required for transcription of ribosomal RNA (rRNA) genes. Binds specifically to the boxA antiterminator sequence of the ribosomal RNA (rrn) operons. In Herpetosiphon aurantiacus (strain ATCC 23779 / DSM 785 / 114-95), this protein is Transcription antitermination protein NusB.